The chain runs to 99 residues: MDATTNFFISYFLPLISFLGLLNLLYTLYSRSRMDRLRFISSSVVSIFTILFGTMPYARYNRLLGESFCNLMVFVLPVSFFLVSLLLWLLRNKYVSELK.

A run of 3 helical transmembrane segments spans residues 7–29 (FFISYFLPLISFLGLLNLLYTLY), 39–61 (FISSSVVSIFTILFGTMPYARYN), and 68–90 (FCNLMVFVLPVSFFLVSLLLWLL).

The protein localises to the cell membrane. This is an uncharacterized protein from Archaeoglobus fulgidus (strain ATCC 49558 / DSM 4304 / JCM 9628 / NBRC 100126 / VC-16).